The chain runs to 224 residues: UPF0173 metal-dependent hydrolase EAT1b_0495 (224 aa).

Belongs to the UPF0173 family.

The sequence is that of UPF0173 metal-dependent hydrolase EAT1b_0495 from Exiguobacterium sp. (strain ATCC BAA-1283 / AT1b).